Consider the following 171-residue polypeptide: Cardioactive peptide (171 aa).

The N-terminal stretch at 1 to 26 (MQMYHVVLGCSLAILLVILDIPQASC) is a signal peptide. The propeptide occupies 27-49 (DDVVIQKRQVDPAEMDRLLDPKR). Residues Cys54 and Cys60 are joined by a disulfide bond. The residue at position 60 (Cys60) is a Cysteine amide. The propeptide occupies 64–171 (RSDESMGTLV…QEEITKPWSR (108 aa)). Residues 116–171 (QSNQFGAGMDRPLPLPIAGYRRKRFADPESQAPAPHSNLPRATSQLQEEITKPWSR) are disordered.

Central nervous system; most neurons exhibit coexpression with burs.

The protein localises to the secreted. Its function is as follows. Cardioregulatory neurohormone that increases heart beat rate during adult wing inflation; has no effect on beat amplitude. The effect of CCAP is both ino- and chronotropic. The protein is Cardioactive peptide of Periplaneta americana (American cockroach).